The primary structure comprises 831 residues: MTSSPSVENGGSGSSGSSALLGCMQQFKLFETQANFYMIGWNGSGVYRILKIDRLEASELNLREDSTAYTKKECYELLKRIHEGNKATGGLKLVTVCYGIIGFIKFLGPYYMLLITERREIGEICGHIVYEVSKSDMIALQHSSVLCNTANLRDENRYKRLLCMVDLTKDFFFSYSYNIMRSFQKNICDHESGGTLYKKMFVWNEFLTRGTRHHLRNTLWTVALVYGFFKQTILSEAGRNFKLTLIARRSRHNAGTRYLKRGINESGNVANDVETEQIVSEDVPVDRPMQISSVVQNRGSIPLFWSQETSRMKVKPDIVLSKRDLNYEATRVHFENLVERYGVPIIILNLIKTNERKPRESILRAEFANAIDFINKDLPEENRLRFLHWDLHKHFHSKTENVLALLGKVAACALMLTGFFYYQLTPAMKLEGYMSLSSSDADTSPHNSSDDDSRDYDSLEKNCRPSKNVANGDYDVKPSRLQSGVLRTNCIDCLDRTNVAQYAYGWAALGQQLHALGIRDAPTIELDDPLSSTLMGLYERMGDTLAYQYGGSAAHNKVFSERRGQWRAATQSQEFLRTLQRYYNNAYMDADKQDAINIFLGTFRPEQGSQAVWELRSDSHSNGRSGEISMGEDEKFLVKRCLSDGNILHESHTPMSAMSRKNESISHRGFVSSHQVTRTHIISESSPDMPAAGDVTLSRCTPSMPSTHFFGDVQKVQHNGSSSIYLSEQEDMSSVSNFVDIEWLSSSENLCENDHLSRPSALTIYSTAETSSSENIITEVKQLTPAMRESGSSSRKGKEPVETELSVHTKIRDDFPDSFKQWVAYGEALCH.

One can recognise an SAC domain in the interval 162–551; it reads LCMVDLTKDF…GDTLAYQYGG (390 aa). A disordered region spans residues 439 to 475; the sequence is SDADTSPHNSSDDDSRDYDSLEKNCRPSKNVANGDYD. Residues 448–463 are compositionally biased toward basic and acidic residues; that stretch reads SSDDDSRDYDSLEKNC. The Phosphatase catalytic core signature appears at 487 to 498; that stretch reads RTNCIDCLDRTN. Residues 785 to 805 form a disordered region; sequence PAMRESGSSSRKGKEPVETEL. The segment covering 796 to 805 has biased composition (basic and acidic residues); it reads KGKEPVETEL.

Component of the PI(3,5)P2 regulatory complex at least composed of ATG18, SAC/FIG4, FAB1 and VAC14. Requires Mg(2+) as cofactor. Ubiquitous with a higher level of expression in young seedlings than in other tissues.

It localises to the vacuole membrane. It carries out the reaction a 1,2-diacyl-sn-glycero-3-phospho-(1D-myo-inositol-3,5-bisphosphate) + H2O = a 1,2-diacyl-sn-glycero-3-phospho-(1D-myo-inositol-3-phosphate) + phosphate. Functionally, the PI(3,5)P2 regulatory complex regulates both the synthesis and turnover of phosphatidylinositol 3,5-bisphosphate (PtdIns(3,5)P2). This chain is Phosphoinositide phosphatase SAC4 (SAC4), found in Arabidopsis thaliana (Mouse-ear cress).